The chain runs to 432 residues: UDP-N-acetylmuramate--L-alanine ligase (432 aa).

108 to 114 (GAHGKTS) contacts ATP.

Belongs to the MurCDEF family.

The protein resides in the cytoplasm. The catalysed reaction is UDP-N-acetyl-alpha-D-muramate + L-alanine + ATP = UDP-N-acetyl-alpha-D-muramoyl-L-alanine + ADP + phosphate + H(+). The protein operates within cell wall biogenesis; peptidoglycan biosynthesis. Functionally, cell wall formation. The protein is UDP-N-acetylmuramate--L-alanine ligase of Bacillus pumilus (strain SAFR-032).